Reading from the N-terminus, the 149-residue chain is Lipoprotein signal peptidase (149 aa).

2 consecutive transmembrane segments (helical) span residues 53-73 (MPGKSWLFFISALLVIMALVI) and 89-109 (GLIAGGALGNLIDRYFYGFVI). Residues aspartate 110 and aspartate 124 contribute to the active site. A helical membrane pass occupies residues 119-139 (VFNLADSAIVCGGILLLILVL).

This sequence belongs to the peptidase A8 family.

The protein resides in the cell membrane. It catalyses the reaction Release of signal peptides from bacterial membrane prolipoproteins. Hydrolyzes -Xaa-Yaa-Zaa-|-(S,diacylglyceryl)Cys-, in which Xaa is hydrophobic (preferably Leu), and Yaa (Ala or Ser) and Zaa (Gly or Ala) have small, neutral side chains.. Its pathway is protein modification; lipoprotein biosynthesis (signal peptide cleavage). In terms of biological role, this protein specifically catalyzes the removal of signal peptides from prolipoproteins. This is Lipoprotein signal peptidase from Syntrophomonas wolfei subsp. wolfei (strain DSM 2245B / Goettingen).